Here is a 296-residue protein sequence, read N- to C-terminus: Sulfotransferase 6B1 (296 aa).

The active-site Proton acceptor is H112. 3'-phosphoadenylyl sulfate contacts are provided by residues R134, S142, Y197, and 253–255 (RKG).

This sequence belongs to the sulfotransferase 1 family.

The protein localises to the cytoplasm. It is found in the cytosol. The catalysed reaction is thyroxine + 3'-phosphoadenylyl sulfate = thyroxine sulfate + adenosine 3',5'-bisphosphate + H(+). Its activity is regulated as follows. Strongly inhibited by the divalent metal cations Fe(2+), Hg(2+), Co(2+), Zn(2+), Cu(2+) and Cd(2+). Functionally, sulfotransferase that utilizes 3'-phospho-5'-adenylyl sulfate (PAPS) as sulfonate donor to catalyze the sulfate conjugation of a variety of xenobiotic and endogenous compounds, including dopamine, T3 (triiodo-L-thyronine), T4 (thyroxine), flavonoids, isoflavonoids, and other phenolic compounds. The chain is Sulfotransferase 6B1 from Danio rerio (Zebrafish).